The following is a 754-amino-acid chain: ToMV resistance protein Tm-1(GCR237) (754 aa).

The tract at residues 1–201 is N-terminal inhibitory domain NN; it reads MATAQSNSPR…AGMVIGRLES (201 aa). ATP contacts are provided by residues 18-20, Thr-55, Arg-92, and 124-127; these read DTK and GSGG. The tract at residues 211–431 is N-terminal inhibitory domain NC; sequence KFTVGVTMFG…VDSFLEISPK (221 aa).

This sequence belongs to the UPF0261 family. In terms of assembly, homodimer. As to quaternary structure, (Microbial infection) Binds, via an ATP bridge, to the tobamoviruses avirulent (Avr) replication proteins (large and small subunits, e.g. tomato mosaic virus (ToMV/TMV) AC P03587, tobacco mild green mosaic virus (TMGMV) AC P18339 and pepper mild mottle virus (PMMoV) AC P89657) to inhibit their function after the translation of tobamoviruses RNA, but before the viral replication complex formation on the membrane surfaces; this interaction is not possible with resistance-breaking strains replication proteins.

In terms of biological role, inhibitor of viral RNA replication which confers resistance to some tobamoviruses including tomato mosaic virus (ToMV) (e.g. isolate L), tobacco mosaic virus (TMV), tobacco mild green mosaic virus (TMGMV) and pepper mild mottle virus (PMMoV), but not to resistance-breaking isolates of ToMV (e.g. LT1, SL-1 and ToMV1-2) and tomato brown rugose fruit virus (ToBRFV). Prevents tobamoviruses RNA replication by affecting the association of tobamoviruses replication proteins (large and small subunits) with host membrane-associated proteins (e.g. TOM1, TOM2A and ARL8), thus inhibiting the replication complex formation on the membranes and avoiding viral negative-strand RNA synthesis. Inhibits triphosphatase activity of ToMV replication proteins. In Solanum lycopersicum (Tomato), this protein is ToMV resistance protein Tm-1(GCR237).